The primary structure comprises 674 residues: Penicillin-binding protein activator LpoA (674 aa).

Positions 1–31 (MLSSTFVRTKAGRSKPVRLTAVIAAALFLAG) are cleaved as a signal peptide. The N-palmitoyl cysteine moiety is linked to residue cysteine 32. The S-diacylglycerol cysteine moiety is linked to residue cysteine 32. Positions 291-349 (GVTPSTPVQQQQPASVPEQAAQPASTDPNANGAVSTSAPDAAPVTAAQPSAPSTAPITP) are disordered. Residues 292–315 (VTPSTPVQQQQPASVPEQAAQPAS) are compositionally biased toward low complexity. Over residues 316–328 (TDPNANGAVSTSA) the composition is skewed to polar residues. A compositionally biased stretch (low complexity) spans 331 to 349 (AAPVTAAQPSAPSTAPITP).

This sequence belongs to the LpoA family. As to quaternary structure, interacts with PBP1a.

It is found in the cell outer membrane. In terms of biological role, regulator of peptidoglycan synthesis that is essential for the function of penicillin-binding protein 1A (PBP1a). This is Penicillin-binding protein activator LpoA from Serratia proteamaculans (strain 568).